The chain runs to 551 residues: Lysine--tRNA ligase (551 aa).

The 'HIGH' region motif lies at 54–62; the sequence is PSGLPHIGT. Positions 303 to 307 match the 'KMSKS' region motif; the sequence is KISKS. Residue lysine 306 participates in ATP binding.

The protein belongs to the class-I aminoacyl-tRNA synthetase family.

It is found in the cytoplasm. It catalyses the reaction tRNA(Lys) + L-lysine + ATP = L-lysyl-tRNA(Lys) + AMP + diphosphate. The polypeptide is Lysine--tRNA ligase (Brucella melitensis biotype 1 (strain ATCC 23456 / CCUG 17765 / NCTC 10094 / 16M)).